The primary structure comprises 242 residues: NAD(P)H-quinone oxidoreductase subunit K (242 aa).

[4Fe-4S] cluster-binding residues include Cys59, Cys60, Cys124, and Cys155.

This sequence belongs to the complex I 20 kDa subunit family. As to quaternary structure, NDH-1 can be composed of about 15 different subunits; different subcomplexes with different compositions have been identified which probably have different functions. Requires [4Fe-4S] cluster as cofactor.

The protein resides in the cellular thylakoid membrane. It carries out the reaction a plastoquinone + NADH + (n+1) H(+)(in) = a plastoquinol + NAD(+) + n H(+)(out). The catalysed reaction is a plastoquinone + NADPH + (n+1) H(+)(in) = a plastoquinol + NADP(+) + n H(+)(out). Functionally, NDH-1 shuttles electrons from an unknown electron donor, via FMN and iron-sulfur (Fe-S) centers, to quinones in the respiratory and/or the photosynthetic chain. The immediate electron acceptor for the enzyme in this species is believed to be plastoquinone. Couples the redox reaction to proton translocation, and thus conserves the redox energy in a proton gradient. Cyanobacterial NDH-1 also plays a role in inorganic carbon-concentration. The sequence is that of NAD(P)H-quinone oxidoreductase subunit K from Synechococcus sp. (strain RCC307).